The primary structure comprises 161 residues: Nucleotide-binding protein Bcep1808_2648 (161 aa).

This sequence belongs to the YajQ family.

Its function is as follows. Nucleotide-binding protein. The chain is Nucleotide-binding protein Bcep1808_2648 from Burkholderia vietnamiensis (strain G4 / LMG 22486) (Burkholderia cepacia (strain R1808)).